The sequence spans 487 residues: Cytochrome P450 monooxygenase pyvB (487 aa).

The helical transmembrane segment at 17-37 threads the bilayer; that stretch reads PAYSSVVIGALVVCLVCLVWP. Residue Cys-426 coordinates heme.

The protein belongs to the cytochrome P450 family. It depends on heme as a cofactor.

The protein resides in the membrane. The protein operates within secondary metabolite biosynthesis. In terms of biological role, cytochrome P450 monooxygenase; part of the gene cluster that mediates the biosynthesis of pyranoviolin A, a pyranonigrin analog with a C-3 methoxy group. Initially, the PKS portion of pyvA synthesizes C-10 carbon chain from 5 molecules of malonyl-CoA, which is then condensed with the thiolation (T) domain-bound glycine activated by the adenylation (A) domain. The subsequent chain release by Dieckmann condensation (DKC) could be catalyzed by the TE domain present at the C-terminus of pyvA and/or the alpha/beta hydrolase pyvD, installing the tetramic acid moiety. The FAD-dependent monooxygenase pyvC next epoxidizes one of the olefins of the polyketide part, and the epoxide ring-opening induces the dihydro-gamma-pyrone ring formation. The cytochrome P450 monooxygeanse pyvB would be responsible for the 2 consecutive reactions, in which the dihydro-gamma-pyrone is oxidized to gamma-pyrone and C-7 is hydroxylated to yield pyranonigrin F. Finally, the O-methyltransferase pyvH methylates the C-3 hydroxy group to complete the biosynthesis. The protein is Cytochrome P450 monooxygenase pyvB of Aspergillus violaceofuscus (strain CBS 115571).